A 28-amino-acid polypeptide reads, in one-letter code: Trypsin inhibitor A (28 aa).

3 disulfide bridges follow: cysteine 3–cysteine 20, cysteine 10–cysteine 22, and cysteine 16–cysteine 27.

This sequence belongs to the protease inhibitor I7 (squash-type serine protease inhibitor) family.

It is found in the secreted. Functionally, inhibits trypsin. In Momordica charantia (Bitter gourd), this protein is Trypsin inhibitor A.